A 198-amino-acid chain; its full sequence is MHYPEPISKLIDSFMKLPGIGPKTAQRLAFHTLDMKEDDVVQFAKALVDVKRELTYCSVCGHITENDPCYICEDKQRDRSVICVVEDDKDVIAMEKMREYKGLYHVLHGSISPMDGIGPEDINIPTLIDRLKDEEVKELILAMNPNLEGESTAMYISRLVKPIGIKVTRLAQGLSVGGDLEYADEVTLSKAIAGRTEM.

The C4-type zinc-finger motif lies at 57–72; it reads CSVCGHITENDPCYIC. The 96-residue stretch at 80 to 175 folds into the Toprim domain; the sequence is SVICVVEDDK…KVTRLAQGLS (96 aa).

This sequence belongs to the RecR family.

Functionally, may play a role in DNA repair. It seems to be involved in an RecBC-independent recombinational process of DNA repair. It may act with RecF and RecO. In Staphylococcus haemolyticus (strain JCSC1435), this protein is Recombination protein RecR.